Reading from the N-terminus, the 99-residue chain is Carboxysome shell vertex protein CcmL (99 aa).

Residues 1 to 83 (MKIARVCGTV…IDAAVVAIID (83 aa)) enclose the BMV domain.

This sequence belongs to the CcmL/EutN family. CcmL subfamily. As to quaternary structure, homopentamer. May interact with CcmK2, this occurs at very high CcmK2 concentrations. Interacts with full-length CcmM.

The protein localises to the carboxysome. Its function is as follows. Probably forms vertices in the carboxysome, a polyhedral inclusion where RuBisCO (ribulose bisphosphate carboxylase, rbcL-rbcS) is sequestered. Has been modeled to induce curvature upon insertion into an otherwise flat hexagonal molecular layer of CcmK subunits. This is Carboxysome shell vertex protein CcmL from Thermosynechococcus vestitus (strain NIES-2133 / IAM M-273 / BP-1).